Consider the following 89-residue polypeptide: Small ribosomal subunit protein bS20 (89 aa).

Residues 1 to 20 (MANHKSAEKRARQTIKRTER) form a disordered region.

This sequence belongs to the bacterial ribosomal protein bS20 family.

Its function is as follows. Binds directly to 16S ribosomal RNA. This is Small ribosomal subunit protein bS20 from Campylobacter concisus (strain 13826).